The sequence spans 213 residues: MTPLKIGVGGPVGSGKTALLEVLCRELRDRYDLAVITNDIYTFEDQRILTRAAALAPERIRGVQTGGCPHTAIREDSSLNQETVEALQGEFPGLELLFIESGGDNLASSFSPELVDAWLFVLDVAGGEKVPRKGGPGIRHSDLLVINKTDLAPLVGADLRVMDADARAQRRAGDEVRPYVFTNLKSGAGVDEIIAWIEHDLLFRDVTPPRVGL.

Position 10–17 (10–17 (GPVGSGKT)) interacts with GTP.

The protein belongs to the SIMIBI class G3E GTPase family. UreG subfamily. As to quaternary structure, homodimer. UreD, UreF and UreG form a complex that acts as a GTP-hydrolysis-dependent molecular chaperone, activating the urease apoprotein by helping to assemble the nickel containing metallocenter of UreC. The UreE protein probably delivers the nickel.

It localises to the cytoplasm. Its function is as follows. Facilitates the functional incorporation of the urease nickel metallocenter. This process requires GTP hydrolysis, probably effectuated by UreG. The polypeptide is Urease accessory protein UreG (Deinococcus radiodurans (strain ATCC 13939 / DSM 20539 / JCM 16871 / CCUG 27074 / LMG 4051 / NBRC 15346 / NCIMB 9279 / VKM B-1422 / R1)).